Reading from the N-terminus, the 506-residue chain is RNA-splicing ligase RtcB homolog 1 (506 aa).

The Mn(2+) site is built by Asp-120, Cys-123, His-228, His-260, and His-354. 227-231 (NHYAE) contacts GMP. Residues 354-355 (HN), 403-406 (GGSM), Ser-410, 429-432 (HGAG), and Lys-505 contribute to the GMP site. His-429 (GMP-histidine intermediate) is an active-site residue.

Belongs to the RtcB family. In terms of assembly, catalytic component of the tRNA-splicing ligase complex. Requires Mn(2+) as cofactor.

The enzyme catalyses a 3'-end 3'-phospho-ribonucleotide-RNA + a 5'-end dephospho-ribonucleoside-RNA + GTP = a ribonucleotidyl-ribonucleotide-RNA + GMP + diphosphate. The catalysed reaction is a 3'-end 2',3'-cyclophospho-ribonucleotide-RNA + a 5'-end dephospho-ribonucleoside-RNA + GTP + H2O = a ribonucleotidyl-ribonucleotide-RNA + GMP + diphosphate + H(+). Functionally, catalytic subunit of the tRNA-splicing ligase complex that acts by directly joining spliced tRNA halves to mature-sized tRNAs by incorporating the precursor-derived splice junction phosphate into the mature tRNA as a canonical 3',5'-phosphodiester. May act as an RNA ligase with broad substrate specificity, and may function toward other RNAs. This chain is RNA-splicing ligase RtcB homolog 1, found in Culex quinquefasciatus (Southern house mosquito).